The primary structure comprises 315 residues: ADP/ATP translocase (315 aa).

Residues 1–13 (MSNKQETKILGMP) lie on the Mitochondrial intermembrane side of the membrane. Solcar repeat units lie at residues 13-106 (PPFV…FKAM) and 118-210 (KWMA…IKPV). The chain crosses the membrane as a helical span at residues 14-37 (PFVVDFLMGGVSAAVSKTAAAPIE). Residue Lys-30 participates in bongkrekate binding. Residues 38–80 (RIKLLVQNQDEMIKAGRLDRRYNGIIDCFRRTTADEGLMALWR) lie on the Mitochondrial matrix side of the membrane. A cardiolipin is bound by residues Ile-62 and 81 to 83 (GNT). Residues 81-104 (GNTANVIRYFPTQALNFAFRDKFK) form a helical membrane-spanning segment. Arg-88 contributes to the ADP binding site. Residues 88–89 (RY) and Asn-96 contribute to the bongkrekate site. At 105 to 115 (AMFGYKKDKDG) the chain is on the mitochondrial intermembrane side. Residues 116-145 (YAKWMAGNLASGGAAGATSLLFVYSLDYAR) traverse the membrane as a helical segment. Over 146 to 184 (TRLANDAKSAKGGGARQFNGLIDVYRKTLASDGIAGLYR) the chain is Mitochondrial matrix. Residues Leu-166 and 184 to 185 (RG) contribute to the a cardiolipin site. The chain crosses the membrane as a helical span at residues 185–213 (GFGPSVAGIVVYRGLYFGMYDSIKPVVLV). 196 to 197 (YR) contacts bongkrekate. Residues 214-216 (GPL) lie on the Mitochondrial intermembrane side of the membrane. A helical transmembrane segment spans residues 217–242 (ANNFLASFLLGWCVTTGAGIASYPLD). The stretch at 218 to 304 (NNFLASFLLG…LSIYDQLQIL (87 aa)) is one Solcar repeat. The Mitochondrial matrix segment spans residues 243-283 (TVRRRMMMTSGEAVKYKSSIDAFRQIIAKEGVKSLFKGAGA). Arg-245 provides a ligand contact to ADP. The Nucleotide carrier signature motif signature appears at 245 to 250 (RRRMMM). A cardiolipin contacts are provided by residues 260 to 261 (SS) and 280 to 282 (GAG). The chain crosses the membrane as a helical span at residues 284 to 304 (NILRGVAGAGVLSIYDQLQIL). At 305 to 315 (LFGKAFKGGSG) the chain is on the mitochondrial intermembrane side.

It belongs to the mitochondrial carrier (TC 2.A.29) family. As to quaternary structure, monomer.

Its subcellular location is the mitochondrion inner membrane. The catalysed reaction is ADP(in) + ATP(out) = ADP(out) + ATP(in). The matrix-open state (m-state) is inhibited by the membrane-permeable bongkrekic acid (BKA). The cytoplasmic-open state (c-state) is inhibited by the membrane-impermeable toxic inhibitor carboxyatractyloside (CATR). In terms of biological role, ADP:ATP antiporter that mediates import of ADP into the mitochondrial matrix for ATP synthesis, and export of ATP out to fuel the cell. Cycles between the cytoplasmic-open state (c-state) and the matrix-open state (m-state): operates by the alternating access mechanism with a single substrate-binding site intermittently exposed to either the cytosolic (c-state) or matrix (m-state) side of the inner mitochondrial membrane. The polypeptide is ADP/ATP translocase (Thermothelomyces thermophilus (strain ATCC 42464 / BCRC 31852 / DSM 1799) (Sporotrichum thermophile)).